We begin with the raw amino-acid sequence, 103 residues long: Major carboxysome shell protein CsoS1 (103 aa).

One can recognise a BMC domain in the interval 9-94 (ALGMIETRGL…PHREVEPALG (86 aa)).

It belongs to the bacterial microcompartments protein family. CsoS1 subfamily. Homohexamer with a small central pore. A CsoS1-CsoS1D-CsoS2 complex can be isolated following expression in E.coli. Forms a CsoS2-CsoS1-RuBisCO complex.

It localises to the carboxysome. In terms of biological role, the major shell protein of the carboxysome, a polyhedral inclusion where RuBisCO (ribulose bisphosphate carboxylase, ccbL-ccbS) is sequestered. Assembles into hexamers which make sheets that form the facets of the polyhedral carboxysome. There are estimated to be 538 CsoS1 hexamers per carboxysome; note this number includes the probable carboxysome shell vertex proteins CsoS4A and CsoS4B. The sequence is that of Major carboxysome shell protein CsoS1 from Prochlorococcus marinus subsp. pastoris (strain CCMP1986 / NIES-2087 / MED4).